Here is a 122-residue protein sequence, read N- to C-terminus: Large ribosomal subunit protein bL19 (122 aa).

It belongs to the bacterial ribosomal protein bL19 family.

This protein is located at the 30S-50S ribosomal subunit interface and may play a role in the structure and function of the aminoacyl-tRNA binding site. The sequence is that of Large ribosomal subunit protein bL19 from Novosphingobium aromaticivorans (strain ATCC 700278 / DSM 12444 / CCUG 56034 / CIP 105152 / NBRC 16084 / F199).